Reading from the N-terminus, the 84-residue chain is MAFLKKSLFLVLFLGIVSLSVCEEEKREGEEKEEKREEEEGKEENEDGNEEHKEKRFLGAILKIGHALAKTVLPMVTNAFKPKQ.

An N-terminal signal peptide occupies residues 1-22 (MAFLKKSLFLVLFLGIVSLSVC). A compositionally biased stretch (basic and acidic residues) spans 23-39 (EEEKREGEEKEEKREEE). The tract at residues 23-53 (EEEKREGEEKEEKREEEEGKEENEDGNEEHK) is disordered. The propeptide occupies 23 to 54 (EEEKREGEEKEEKREEEEGKEENEDGNEEHKE). Residues 40-49 (EGKEENEDGN) show a composition bias toward acidic residues.

Expressed by the skin glands.

It localises to the secreted. Its function is as follows. Antimicrobial peptide that displays antibacterial, antiprotozoal, and antiviral activity. Exhibits antibacterial activity against the Gram-positive bacteria S.epidermidis ATCC 12228 (MIC=4 uM), E.casseliflavus ATCC 700327 (MIC=4 uM), S.aureus ATCC 25923 (MIC=8 uM) and E.faecalis ATCC 29212 (MIC=8 uM), and the Gram-negative bacteria E.coli ATCC 25922 (MIC=8 uM), K.pneumoniae ATCC 13883 (MIC=8 uM), the multi-resistant clinical isolate strain K.pneumoniae carbapanemase (KPC) MR (MIC=16 uM), and P.aeruginosa ATCC 27853 (MIC=32 uM). Displays antiprotozoal activity against the epimastigote form of T.cruzi (IC(50)=6.32 uM). Does not show antimicrobial against the fungi C.albicans ATCC 90028 and C.parapsilosis ATCC 22019. Displays antiviral activity against the human viruses chikungunya (EC(50)=17.9 uM), Dengue serotype 4 (EC(50)=20.8 uM) and Yellow Fever (EC(50)=21.8 uM). Shows moderate cytolytic activity against human erythrocytes (HC(50)=48.9 uM), and activates the oxidative burst in human neutrophils. Also displays anti-proliferative effects against MCF-7 breast cancer cells (IC(50)=15.3 uM) and B16F10 murine melanoma cells (IC(50)=12.8 uM). This chain is Figainin 2, found in Boana raniceps (Chaco tree frog).